Here is a 371-residue protein sequence, read N- to C-terminus: MTDIKKVNLLGLSPEKLIEFFESIGEKKFRATQVIKWIHQKGAESFEEMTDVSKALRAKLEQICEIRGPEVVSQNISTDGTRKWIIRTEGGKNDCVETVLIPDGDRATLCVSSQVGCSLDCSFCSTGKQGFNRNLTPAEIIGQVWIAIKSFGPMDPNGPRRVTNVVMMGMGEPLMNFEPVVDAMILMMHDHAYGLSKRRVTLSTSGVVPKIYELVKRTDVSLAISLHAPNDALRNELVPINKKYPIAELLEACQFYLENLPDKRHITIEYTLMSGVNDNEEQAHELAELLKVLECKINLIPFNPFPHSGYEKPSNNRTRRFQKILADAGYTVTVRTTRGDDIDAACGQLVGDFHDKTRRSQKYIELREVKS.

Catalysis depends on Glu-97, which acts as the Proton acceptor. Residues 103-341 enclose the Radical SAM core domain; that stretch reads DGDRATLCVS…VTVRTTRGDD (239 aa). Cysteines 110 and 346 form a disulfide. Residues Cys-117, Cys-121, and Cys-124 each coordinate [4Fe-4S] cluster. S-adenosyl-L-methionine-binding positions include 171–172, Ser-203, 225–227, and Asn-303; these read GE and SLH. The active-site S-methylcysteine intermediate is the Cys-346.

Belongs to the radical SAM superfamily. RlmN family. It depends on [4Fe-4S] cluster as a cofactor.

The protein resides in the cytoplasm. It catalyses the reaction adenosine(2503) in 23S rRNA + 2 reduced [2Fe-2S]-[ferredoxin] + 2 S-adenosyl-L-methionine = 2-methyladenosine(2503) in 23S rRNA + 5'-deoxyadenosine + L-methionine + 2 oxidized [2Fe-2S]-[ferredoxin] + S-adenosyl-L-homocysteine. It carries out the reaction adenosine(37) in tRNA + 2 reduced [2Fe-2S]-[ferredoxin] + 2 S-adenosyl-L-methionine = 2-methyladenosine(37) in tRNA + 5'-deoxyadenosine + L-methionine + 2 oxidized [2Fe-2S]-[ferredoxin] + S-adenosyl-L-homocysteine. Specifically methylates position 2 of adenine 2503 in 23S rRNA and position 2 of adenine 37 in tRNAs. m2A2503 modification seems to play a crucial role in the proofreading step occurring at the peptidyl transferase center and thus would serve to optimize ribosomal fidelity. This chain is Dual-specificity RNA methyltransferase RlmN, found in Marinomonas sp. (strain MWYL1).